The chain runs to 329 residues: Quinone-oxidoreductase QR1, chloroplastic (329 aa).

It belongs to the zinc-containing alcohol dehydrogenase family. Quinone oxidoreductase subfamily.

The protein localises to the plastid. It is found in the chloroplast outer membrane. It carries out the reaction 2 a quinone + NADPH + H(+) = 2 a 1,4-benzosemiquinone + NADP(+). Inhibited by dicumarol. NADPH-dependent single-electron reducing quinone reductase. Involved in haustorium initiation in parasitic plants through redox cycling of exogenous haustorium-inducing factors. Can use 9,10-phenanthrenequinone (PAQ), 1,2-naphthoquinone, 5-hydroxy-1,4-naphthoquinone (juglone) and 2,6-dimethoxy-p-benzoquinone (DMBQ) as substrates, but has no activity with menadione, diamide, 2,3-dimethoxy-5-methyl-1,4-benzoquinone or 1,4-naphthoquinone. This is Quinone-oxidoreductase QR1, chloroplastic from Triphysaria versicolor (Yellow owl's clover).